Consider the following 161-residue polypeptide: Transcriptional repressor NrdR (161 aa).

Over residues 1–11 the composition is skewed to polar residues; it reads MRCPSCNSLDT. The segment at 1–20 is disordered; the sequence is MRCPSCNSLDTQVKDSRPTE. Residues 3–34 fold into a zinc finger; the sequence is CPSCNSLDTQVKDSRPTEDSSVIRRRRVCVTC. The 91-residue stretch at 49-139 folds into the ATP-cone domain; sequence LTVIKRNGRR…VYRNFREAKD (91 aa).

Belongs to the NrdR family. Zn(2+) is required as a cofactor.

In terms of biological role, negatively regulates transcription of bacterial ribonucleotide reductase nrd genes and operons by binding to NrdR-boxes. The sequence is that of Transcriptional repressor NrdR from Bradyrhizobium sp. (strain BTAi1 / ATCC BAA-1182).